The primary structure comprises 305 residues: Serine/threonine-protein phosphatase 4 catalytic subunit (305 aa).

Residues Asp52, His54, Asp80, and Asn112 each coordinate Mn(2+). The Proton donor role is filled by His113. His162 and His236 together coordinate Mn(2+).

The protein belongs to the PPP phosphatase family. PP-4 (PP-X) subfamily. As to quaternary structure, serine/threonine-protein phosphatase 4 (PP4) occurs in different assemblies of the catalytic and one or more regulatory subunits. Probably part of a PP4 complex containing ppp4c and ppp4r2. Interacts with smkA. Requires Mn(2+) as cofactor.

It localises to the cytoplasm. It is found in the nucleus. The enzyme catalyses O-phospho-L-seryl-[protein] + H2O = L-seryl-[protein] + phosphate. It carries out the reaction O-phospho-L-threonyl-[protein] + H2O = L-threonyl-[protein] + phosphate. Required for development, chemotaxis and the expression of numerous genes. The sequence is that of Serine/threonine-protein phosphatase 4 catalytic subunit (ppp4c) from Dictyostelium discoideum (Social amoeba).